We begin with the raw amino-acid sequence, 356 residues long: D-alanine--D-alanine ligase (356 aa).

Positions 134–339 (KQLFEHRGLP…YPELITKLIE (206 aa)) constitute an ATP-grasp domain. Residue 167–222 (NDKLNYPVFVKPANLGSSVGISKCNNEAELKEGIKEAFQFDRKLVIEQGVNAREIE) coordinates ATP. Mg(2+) is bound by residues Asp-293, Glu-306, and Asn-308.

This sequence belongs to the D-alanine--D-alanine ligase family. The cofactor is Mg(2+). It depends on Mn(2+) as a cofactor.

Its subcellular location is the cytoplasm. It catalyses the reaction 2 D-alanine + ATP = D-alanyl-D-alanine + ADP + phosphate + H(+). The protein operates within cell wall biogenesis; peptidoglycan biosynthesis. In terms of biological role, cell wall formation. This Staphylococcus aureus (strain Mu3 / ATCC 700698) protein is D-alanine--D-alanine ligase.